The following is a 331-amino-acid chain: Ketol-acid reductoisomerase (NADP(+)) (331 aa).

Residues 2 to 182 enclose the KARI N-terminal Rossmann domain; it reads ARMYYDEDAN…GGTRAGVLET (181 aa). Residues 25 to 28, S51, S53, and 83 to 86 contribute to the NADP(+) site; these read YGSQ and DEVQ. Residue H108 is part of the active site. G134 lines the NADP(+) pocket. The 146-residue stretch at 183 to 328 folds into the KARI C-terminal knotted domain; the sequence is TFREETETDL…KDLRAMFSWL (146 aa). The Mg(2+) site is built by D191, E195, E227, and E231. S252 is a substrate binding site.

This sequence belongs to the ketol-acid reductoisomerase family. Requires Mg(2+) as cofactor.

It carries out the reaction (2R)-2,3-dihydroxy-3-methylbutanoate + NADP(+) = (2S)-2-acetolactate + NADPH + H(+). The enzyme catalyses (2R,3R)-2,3-dihydroxy-3-methylpentanoate + NADP(+) = (S)-2-ethyl-2-hydroxy-3-oxobutanoate + NADPH + H(+). It functions in the pathway amino-acid biosynthesis; L-isoleucine biosynthesis; L-isoleucine from 2-oxobutanoate: step 2/4. It participates in amino-acid biosynthesis; L-valine biosynthesis; L-valine from pyruvate: step 2/4. In terms of biological role, involved in the biosynthesis of branched-chain amino acids (BCAA). Catalyzes an alkyl-migration followed by a ketol-acid reduction of (S)-2-acetolactate (S2AL) to yield (R)-2,3-dihydroxy-isovalerate. In the isomerase reaction, S2AL is rearranged via a Mg-dependent methyl migration to produce 3-hydroxy-3-methyl-2-ketobutyrate (HMKB). In the reductase reaction, this 2-ketoacid undergoes a metal-dependent reduction by NADPH to yield (R)-2,3-dihydroxy-isovalerate. The sequence is that of Ketol-acid reductoisomerase (NADP(+)) from Nostoc punctiforme (strain ATCC 29133 / PCC 73102).